A 310-amino-acid polypeptide reads, in one-letter code: Vomeronasal type-1 receptor 53 (310 aa).

The Extracellular portion of the chain corresponds to 1-20 (MNKANLLHTDINLKITLFSE). The chain crosses the membrane as a helical span at residues 21–41 (VSVGISANSILIFAHLCMLLG). Residues 42 to 50 (ENRPKPIDL) are Cytoplasmic-facing. Residues 51–71 (YIAFFSLTQLMLLITMGLIAV) traverse the membrane as a helical segment. Residues 72–93 (DMFMPWGRWDSTTCQSLIYLHR) lie on the Extracellular side of the membrane. Cys-85 and Cys-172 form a disulfide bridge. A helical transmembrane segment spans residues 94 to 114 (LLRGLTLSATCLLNVLWTITL). The Cytoplasmic segment spans residues 115–134 (SPRSSCLTKFKHKSLQHISC). The helical transmembrane segment at 135–155 (AFLFLCVLYMSFNSHLFISII) threads the bilayer. Residues 156–183 (AYPNLTLENFMYVTQSCSLIPLSYFRKS) are Extracellular-facing. Asn-159 carries an N-linked (GlcNAc...) asparagine glycan. Residues 184–204 (MFSIPMAIREALLIGLMALSG) form a helical membrane-spanning segment. Residues 205-238 (GYMVAHLWRHKKQAQHLHRTSLSSKASPEQRATR) lie on the Cytoplasmic side of the membrane. The helical transmembrane segment at 239 to 259 (TIMLLMSFFVVLYILDLVIFH) threads the bilayer. Topologically, residues 260–268 (SRMKFKDGS) are extracellular. Residues 269–289 (ILYGVQIIVSHSYATVSPFVF) form a helical membrane-spanning segment. Residues 290–310 (ICTEKRITNFLRSMCGRIVNI) lie on the Cytoplasmic side of the membrane.

The protein belongs to the G-protein coupled receptor 1 family.

It is found in the cell membrane. In terms of biological role, putative pheromone receptor implicated in the regulation of social and reproductive behavior. This Mus musculus (Mouse) protein is Vomeronasal type-1 receptor 53 (Vmn1r53).